Reading from the N-terminus, the 422-residue chain is G-protein coupled receptor 83 (422 aa).

A signal peptide spans 1–17; the sequence is MNVPPVLLLFLLSSVRA. At 18-70 the chain is on the extracellular side; it reads TEQPQVVTEHPSMDAALTGANASHFWANYTFSDWQNFVGRRRYGAESQNPTVK. A helical transmembrane segment spans residues 71-91; sequence ALLIVAYSFIIVFSLFGNVLV. The Cytoplasmic segment spans residues 92-106; sequence CHVIFKNQRMHSATS. A helical transmembrane segment spans residues 107-127; that stretch reads LFIVNLAVADIMITLLNTPFT. The Extracellular segment spans residues 128–143; the sequence is LVRFVNSTWVFGKGMC. The cysteines at positions 143 and 223 are disulfide-linked. The chain crosses the membrane as a helical span at residues 144 to 166; the sequence is HVSRFAQYCSLHVSALTLTAIAV. At 167–184 the chain is on the cytoplasmic side; it reads DRHQVIMHPLKPRISITK. A helical transmembrane segment spans residues 185 to 205; the sequence is GVIYIAVIWVMATFFSLPHAI. Residues 206–236 lie on the Extracellular side of the membrane; it reads CQKLFTFKYSEDIVRSLCLPDFPEPADLFWK. The helical transmembrane segment at 237 to 257 threads the bilayer; it reads YLDLATFILLYLLPLFIISVA. The Cytoplasmic segment spans residues 258 to 292; it reads YARVAKKLWLCNTIGDVTTEQYLALRRKKKTTVKM. The helical transmembrane segment at 293 to 313 threads the bilayer; that stretch reads LVLVVVLFALCWFPLNCYVLL. Over 314–326 the chain is Extracellular; it reads LSSKAIHTNNALY. A helical transmembrane segment spans residues 327-347; sequence FAFHWFAMSSTCYNPFIYCWL. Residues 348 to 422 lie on the Cytoplasmic side of the membrane; that stretch reads NENFRVELKA…SSVEPTVAVS (75 aa). Positions 401–422 are disordered; it reads PSSQIQSGKTDLSSVEPTVAVS.

Belongs to the G-protein coupled receptor 1 family. In terms of tissue distribution, expressed preferentially in brain, and its neuronal expression is relegated to limbic brain regions, particularly in forebrain.

It localises to the cell membrane. In terms of biological role, G-protein coupled receptor for PEN, a neuropeptide produced from the precursor protein, proSAAS (encoded by PCSK1N). Acts through a G(i)- and G(q)-alpha-alpha-mediated pathway in response to PEN. Plays a role in food intake and body weight regulation. May contribute to the regulation of anxiety-related behaviors. This Rattus norvegicus (Rat) protein is G-protein coupled receptor 83.